The sequence spans 163 residues: Translation initiation factor IF-3-like (163 aa).

This sequence belongs to the IF-3 family.

The protein is Translation initiation factor IF-3-like of Nostoc sp. (strain PCC 7120 / SAG 25.82 / UTEX 2576).